An 88-amino-acid chain; its full sequence is Small ribosomal subunit protein bS20 (88 aa).

Belongs to the bacterial ribosomal protein bS20 family.

Binds directly to 16S ribosomal RNA. This Clostridium kluyveri (strain NBRC 12016) protein is Small ribosomal subunit protein bS20.